The primary structure comprises 509 residues: Lengsin (509 aa).

Residues 1-34 (MNNEEDLLQEDSTRDEGNETEANSMNTLRRTRKK) form a disordered region. In terms of domain architecture, GS beta-grasp spans 83-177 (NRLQFVRFEA…VICDTFTVTG (95 aa)). In terms of domain architecture, GS catalytic spans 184 to 509 (PRYIAKRQLS…ERNKFLEYFI (326 aa)).

This sequence belongs to the glutamine synthetase family. Dodecamer. Interacts with BFSP2 and VIM. As to expression, abundantly expressed in lens.

Its function is as follows. May act as a component of the cytoskeleton or as a chaperone for the reorganization of intermediate filament proteins during terminal differentiation in the lens. Does not seem to have enzymatic activity. This chain is Lengsin (LGSN), found in Homo sapiens (Human).